The primary structure comprises 655 residues: Endoplasmic reticulum chaperone BiP (655 aa).

Residues 1-19 (MMKFTVVAAALLLLGAVRA) form the signal peptide. Residues 1–81 (MMKFTVVAAA…EGERLIGDAA (81 aa)) form a required for interaction with ELAPOR1 region. Residue 37 to 40 (GTTY) coordinates ATP. Residue S87 is modified to Phosphoserine. K97 is an ATP binding site. An N6-acetyllysine modification is found at K126. The interval 126-281 (KPYIQVDIGG…KKKTGKDVRK (156 aa)) is nucleotide-binding (NBD). Y161 carries the 3'-nitrotyrosine modification. K214 bears the N6-acetyllysine mark. 228–230 (GGT) contacts ATP. At K272 the chain carries N6-acetyllysine. 294 to 301 (EKAKRALS) provides a ligand contact to ATP. K327 carries the N6-acetyllysine modification. A Glycyl lysine isopeptide (Lys-Gly) (interchain with G-Cter in SUMO2) cross-link involves residue K353. K354 is subject to N6-acetyllysine; alternate. K354 participates in a covalent cross-link: Glycyl lysine isopeptide (Lys-Gly) (interchain with G-Cter in SUMO1); alternate. 365-368 (GSTR) provides a ligand contact to ATP. The segment at 410 to 420 (QDTGDLVLLDV) is interdomain linker. The substrate-binding (SBD) stretch occupies residues 421–501 (CPLTLGIETV…PRGVPQIEVT (81 aa)). Residue K448 is modified to N6-succinyllysine. An Omega-N-methylarginine modification is found at R493. An O-AMP-threonine; alternate modification is found at T519. The residue at position 519 (T519) is a Phosphothreonine; alternate. K586 carries the post-translational modification N6,N6,N6-trimethyllysine; by METTL21A; in vitro. An N6,N6-dimethyllysine; alternate modification is found at K586. K586 is subject to N6-methyllysine; alternate. K592 is subject to N6-methyllysine. A disordered region spans residues 632–655 (ISKLYGSGGPPPTGEEDTSEKDEL). Residues T644 and T649 each carry the phosphothreonine modification. Residues 645 to 655 (GEEDTSEKDEL) are compositionally biased toward acidic residues. S650 carries the phosphoserine modification. The Prevents secretion from ER signature appears at 652–655 (KDEL).

Belongs to the heat shock protein 70 family. In terms of assembly, monomer and homooligomer; homooligomerization via the interdomain linker inactivates the chaperone activity and acts as a storage of HSPA5/BiP molecules. Interacts with DNAJC1 (via J domain). Component of an EIF2 complex at least composed of CELF1/CUGBP1, CALR, CALR3, EIF2S1, EIF2S2, HSP90B1 and HSPA5. Part of a large chaperone multiprotein complex comprising DNAJB11, HSP90B1, HSPA5, HYOU, PDIA2, PDIA4, PDIA6, PPIB, SDF2L1, UGGT1 and very small amounts of ERP29, but not, or at very low levels, CALR nor CANX. Interacts with TMEM132A and TRIM21. May form a complex with ERLEC1, OS9, SEL1L and SYVN1. Interacts with DNAJC10. Interacts with DNAJB9/ERdj4; leading to recruit HSPA5/BiP to ERN1/IRE1. Interacts with ERN1/IRE1 (via luminal domain); the interaction takes place following interaction with DNAJB9/ERdj4 and leads to inactivate ERN1/IRE1, the interaction also competitively inhibits ERN1 interaction with MANF. Interacts directly with MANF (via SAP domain); the interaction inhibits ATP binding to HSPA5/BiP and subsequent nucleotide exchange. Interacts with ERN1 (via luminal domain); the interaction competitively inhibits ERN1 interaction with MANF. Interacts with EIF2AK3/PERK (via luminal domain); interaction leads to inactivate EIF2AK3/PERK. Interacts with MX1. Interacts with METTL23. Interacts with CEMIP; the interaction induces calcium leakage from the endoplasmic reticulum and cell migration. Interacts with PCSK4 form; the interaction takes place in the endoplasmic reticulum. Interacts with CIPC. Interacts with CCDC88B (via C-terminus); the interaction opposes ERN1-mediated JNK activation, protecting against apoptosis. Interacts with INPP5K; necessary for INPP5K localization at the endoplasmic reticulum. Interacts with MANF; the interaction is direct. Interacts with LOXL2; leading to activate the ERN1/IRE1-XBP1 pathway of the unfolded protein response. Interacts with CLU under stressed condition; interaction increases CLU protein stability; facilitates its retrotranslocation and redistribution to the mitochondria; cooperatively suppress stress-induced apoptosis by stabilizing mitochondrial membrane integrity. Interacts with CCDC47. Interacts with CLN3. Interacts with ELAPOR1; may regulate the function of HSPA5 in apoptosis and cell proliferation. Interacts with CASP7. Interacts with ILDR2; the interaction stabilizes ILDR2 expression. Interacts with ADAM7. In unstressed cells, AMPylation at Thr-519 by FICD inactivates the chaperome activity: AMPylated form is locked in a relatively inert state and only weakly stimulated by J domain-containing proteins. In response to endoplasmic reticulum stress, de-AMPylation by the same protein, FICD, restores the chaperone activity. Expressed in sperm (at protein level).

The protein resides in the endoplasmic reticulum lumen. The protein localises to the melanosome. It is found in the cytoplasm. It localises to the cell surface. It carries out the reaction ATP + H2O = ADP + phosphate + H(+). Its activity is regulated as follows. The chaperone activity is regulated by ATP-induced allosteric coupling of the nucleotide-binding (NBD) and substrate-binding (SBD) domains. In the ADP-bound and nucleotide-free (apo) states, the two domains have little interaction. In contrast, in the ATP-bound state the two domains are tightly coupled, which results in drastically accelerated kinetics in both binding and release of polypeptide substrates. J domain-containing co-chaperones (DNAJB9/ERdj4 or DNAJC10/ERdj5) stimulate the ATPase activity and are required for efficient substrate recognition by HSPA5/BiP. Homooligomerization inactivates participating HSPA5/BiP protomers and probably act as reservoirs to store HSPA5/BiP molecules when they are not needed by the cell. Endoplasmic reticulum chaperone that plays a key role in protein folding and quality control in the endoplasmic reticulum lumen. Involved in the correct folding of proteins and degradation of misfolded proteins via its interaction with DNAJC10/ERdj5, probably to facilitate the release of DNAJC10/ERdj5 from its substrate. Acts as a key repressor of the EIF2AK3/PERK and ERN1/IRE1-mediated unfolded protein response (UPR). In the unstressed endoplasmic reticulum, recruited by DNAJB9/ERdj4 to the luminal region of ERN1/IRE1, leading to disrupt the dimerization of ERN1/IRE1, thereby inactivating ERN1/IRE1. Also binds and inactivates EIF2AK3/PERK in unstressed cells. Accumulation of misfolded protein in the endoplasmic reticulum causes release of HSPA5/BiP from ERN1/IRE1 and EIF2AK3/PERK, allowing their homodimerization and subsequent activation. Plays an auxiliary role in post-translational transport of small presecretory proteins across endoplasmic reticulum (ER). May function as an allosteric modulator for SEC61 channel-forming translocon complex, likely cooperating with SEC62 to enable the productive insertion of these precursors into SEC61 channel. Appears to specifically regulate translocation of precursors having inhibitory residues in their mature region that weaken channel gating. May also play a role in apoptosis and cell proliferation. The protein is Endoplasmic reticulum chaperone BiP of Mus musculus (Mouse).